Consider the following 90-residue polypeptide: Mucin-like protein 1 (90 aa).

An N-terminal signal peptide occupies residues Met1–Gln20. O-linked (GalNAc...) threonine glycosylation is found at Thr23, Thr24, Thr30, Thr34, Thr46, Thr47, Thr51, Thr52, Thr54, Thr55, Thr59, Thr60, Thr62, and Thr63. 2 stretches are compositionally biased toward low complexity: residues Ala25–Pro36 and Ala44–Thr68. Residues Ala25–Thr68 form a disordered region. Repeat copies occupy residues Thr46–Ala53, Thr54–Ala61, and Thr62–Ala69. The tract at residues Thr46 to Ala69 is 3 X 8 AA tandem repeat of T-T-A-A-[APS]-T-T-A. Ser66 carries an O-linked (GalNAc...) serine glycan. 2 O-linked (GalNAc...) threonine glycosylation sites follow: Thr67 and Thr68.

O-glycosylated. As to expression, expressed in mammary, salivary glands and prostate. Also detected in lung. Mainly expressed in cancer cell lines of breast origin. Highly expressed in lymph node-positive compared with node-negative tumors. Detected in all lymph node containing metastatic cells.

It is found in the secreted. Its subcellular location is the membrane. Functionally, may play a role as marker for the diagnosis of metastatic breast cancer. This is Mucin-like protein 1 (MUCL1) from Homo sapiens (Human).